The sequence spans 228 residues: Probable octanoyltransferase (228 aa).

Residues 27-198 (SGGDDAFILV…AFEEVFEAKV (172 aa)) enclose the BPL/LPL catalytic domain. Substrate-binding positions include 65-72 (RGGDATYH), 129-131 (SIG), and 142-144 (GVA). Cysteine 160 serves as the catalytic Acyl-thioester intermediate.

This sequence belongs to the LipB family.

The protein localises to the cytoplasm. The enzyme catalyses octanoyl-[ACP] + L-lysyl-[protein] = N(6)-octanoyl-L-lysyl-[protein] + holo-[ACP] + H(+). Its pathway is protein modification; protein lipoylation via endogenous pathway; protein N(6)-(lipoyl)lysine from octanoyl-[acyl-carrier-protein]: step 1/2. Catalyzes the transfer of endogenously produced octanoic acid from octanoyl-acyl-carrier-protein onto the lipoyl domains of lipoate-dependent enzymes. Lipoyl-ACP can also act as a substrate although octanoyl-ACP is likely to be the physiological substrate. The polypeptide is Probable octanoyltransferase (Pyrobaculum calidifontis (strain DSM 21063 / JCM 11548 / VA1)).